We begin with the raw amino-acid sequence, 90 residues long: Small ribosomal subunit protein uS15 (90 aa).

The protein belongs to the universal ribosomal protein uS15 family. Part of the 30S ribosomal subunit. Forms a bridge to the 50S subunit in the 70S ribosome, contacting the 23S rRNA.

One of the primary rRNA binding proteins, it binds directly to 16S rRNA where it helps nucleate assembly of the platform of the 30S subunit by binding and bridging several RNA helices of the 16S rRNA. In terms of biological role, forms an intersubunit bridge (bridge B4) with the 23S rRNA of the 50S subunit in the ribosome. The chain is Small ribosomal subunit protein uS15 from Campylobacter lari (strain RM2100 / D67 / ATCC BAA-1060).